The sequence spans 613 residues: DBH-like monooxygenase protein 1 (613 aa).

The first 19 residues, 1–19 (MCGWPLLVLWALLPATAAG), serve as a signal peptide directing secretion. Topologically, residues 20–587 (SPGRSYPHRV…PLVCEKAASP (568 aa)) are lumenal. One can recognise a DOMON domain in the interval 35–148 (GKYWLHWGRQ…STVRVIWAYH (114 aa)). N-linked (GlcNAc...) asparagine glycosylation occurs at Asn-114. The active site involves Tyr-203. Intrachain disulfides connect Cys-205-Cys-257 and Cys-242-Cys-269. The Cu cation site is built by His-235 and His-236. Asn-247 is a glycosylation site (N-linked (GlcNAc...) asparagine). Positions 307, 389, 391, and 464 each coordinate Cu cation. 3 cysteine pairs are disulfide-bonded: Cys-364–Cys-480, Cys-368–Cys-550, and Cys-443–Cys-465. His-389 is a catalytic residue. 2 N-linked (GlcNAc...) asparagine glycosylation sites follow: Asn-476 and Asn-517. Residues 588 to 608 (PLHGIFSLRLLTCALLLGSML) traverse the membrane as a helical segment.

This sequence belongs to the copper type II ascorbate-dependent monooxygenase family. Cu(2+) is required as a cofactor. In terms of processing, N-glycosylated. In terms of tissue distribution, broadly exprressed, with highest levels in salivary gland and ovary.

It is found in the endoplasmic reticulum membrane. The protein is DBH-like monooxygenase protein 1 (Moxd1) of Mus musculus (Mouse).